We begin with the raw amino-acid sequence, 393 residues long: Digeranylgeranylglycerophospholipid reductase (393 aa).

Residues Ala-13, Asp-32, Cys-43, Ala-44, Gly-46, Arg-95, Val-119, Asp-274, and Gly-286 each coordinate FAD. A 2,3-bis-O-(geranylgeranyl)-sn-glycerol 1-phospholipid contacts are provided by Arg-327 and Gly-363.

This sequence belongs to the geranylgeranyl reductase family. DGGGPL reductase subfamily. It depends on FAD as a cofactor.

The catalysed reaction is a 2,3-bis-O-phytanyl-sn-glycerol 1-phospholipid + 8 A = a 2,3-bis-O-(geranylgeranyl)-sn-glycerol 1-phospholipid + 8 AH2. It carries out the reaction 2,3-bis-O-(phytanyl)-sn-glycerol 1-phosphate + 8 A = 2,3-bis-O-(geranylgeranyl)-sn-glycerol 1-phosphate + 8 AH2. It catalyses the reaction CDP-2,3-bis-O-(geranylgeranyl)-sn-glycerol + 8 AH2 = CDP-2,3-bis-O-(phytanyl)-sn-glycerol + 8 A. The enzyme catalyses archaetidylserine + 8 AH2 = 2,3-bis-O-phytanyl-sn-glycero-3-phospho-L-serine + 8 A. Its pathway is membrane lipid metabolism; glycerophospholipid metabolism. Is involved in the reduction of 2,3-digeranylgeranylglycerophospholipids (unsaturated archaeols) into 2,3-diphytanylglycerophospholipids (saturated archaeols) in the biosynthesis of archaeal membrane lipids. Catalyzes the formation of archaetidic acid (2,3-di-O-phytanyl-sn-glyceryl phosphate) from 2,3-di-O-geranylgeranylglyceryl phosphate (DGGGP) via the hydrogenation of each double bond of the isoprenoid chains. Is also probably able to reduce double bonds of geranyl groups in CDP-2,3-bis-O-(geranylgeranyl)-sn-glycerol and archaetidylserine, thus acting at various stages in the biosynthesis of archaeal membrane lipids. The polypeptide is Digeranylgeranylglycerophospholipid reductase (Pyrococcus horikoshii (strain ATCC 700860 / DSM 12428 / JCM 9974 / NBRC 100139 / OT-3)).